The sequence spans 463 residues: RuvB-like helicase 2 (463 aa).

Residue 76 to 83 coordinates ATP; sequence GPPSTGKT.

It belongs to the RuvB family. In terms of assembly, may form heterododecamers with RVB1. Component of the SWR1 chromatin remodeling complex, the INO80 chromatin remodeling complex, and of the R2TP complex.

It is found in the nucleus. The catalysed reaction is ATP + H2O = ADP + phosphate + H(+). Functionally, DNA helicase which participates in several chromatin remodeling complexes, including the SWR1 and the INO80 complexes. The SWR1 complex mediates the ATP-dependent exchange of histone H2A for the H2A variant HZT1 leading to transcriptional regulation of selected genes by chromatin remodeling. The INO80 complex remodels chromatin by shifting nucleosomes and is involved in DNA repair. Also involved in pre-rRNA processing. In Cryptococcus neoformans var. neoformans serotype D (strain JEC21 / ATCC MYA-565) (Filobasidiella neoformans), this protein is RuvB-like helicase 2 (RVB2).